The primary structure comprises 218 residues: Protein GrpE (218 aa).

Over residues 1–21 (MSDKQREAERQQSEDKAHSEA) the composition is skewed to basic and acidic residues. Residues 1–66 (MSDKQREAER…LEEARARAEE (66 aa)) form a disordered region. Low complexity predominate over residues 24–36 (AEAGQAPEAQAAE).

Belongs to the GrpE family. As to quaternary structure, homodimer.

The protein resides in the cytoplasm. In terms of biological role, participates actively in the response to hyperosmotic and heat shock by preventing the aggregation of stress-denatured proteins, in association with DnaK and GrpE. It is the nucleotide exchange factor for DnaK and may function as a thermosensor. Unfolded proteins bind initially to DnaJ; upon interaction with the DnaJ-bound protein, DnaK hydrolyzes its bound ATP, resulting in the formation of a stable complex. GrpE releases ADP from DnaK; ATP binding to DnaK triggers the release of the substrate protein, thus completing the reaction cycle. Several rounds of ATP-dependent interactions between DnaJ, DnaK and GrpE are required for fully efficient folding. The protein is Protein GrpE of Alkalilimnicola ehrlichii (strain ATCC BAA-1101 / DSM 17681 / MLHE-1).